A 139-amino-acid polypeptide reads, in one-letter code: FAD synthase (139 aa).

ATP-binding positions include 9–10, 14–17, and Asp-92; these read TF and HPGH.

The protein belongs to the archaeal FAD synthase family. As to quaternary structure, homodimer. A divalent metal cation is required as a cofactor.

The catalysed reaction is FMN + ATP + H(+) = FAD + diphosphate. Its pathway is cofactor biosynthesis; FAD biosynthesis; FAD from FMN: step 1/1. Functionally, catalyzes the transfer of the AMP portion of ATP to flavin mononucleotide (FMN) to produce flavin adenine dinucleotide (FAD) coenzyme. In Methanosarcina barkeri (strain Fusaro / DSM 804), this protein is FAD synthase.